Reading from the N-terminus, the 270-residue chain is Interleukin-1 beta (270 aa).

A propeptide spanning residues 1 to 118 (MATVPEPTSE…VYDDDAFVCD (118 aa)) is cleaved from the precursor.

This sequence belongs to the IL-1 family. In terms of assembly, monomer. In its precursor form, weakly interacts with full-length MEFV; the mature cytokine does not interact at all. Interacts with integrins ITGAV:ITGBV and ITGA5:ITGB1; integrin-binding is required for IL1B signaling. Interacts with cargo receptor TMED10; the interaction is direct and is required for the secretion of IL1B mature form. Interacts with HSP90AB1; the interaction facilitates cargo translocation into the ERGIC. Interacts with HSP90B1; the interaction facilitates cargo translocation into the ERGIC.

It is found in the cytoplasm. It localises to the cytosol. The protein localises to the secreted. The protein resides in the lysosome. Its subcellular location is the extracellular exosome. Functionally, potent pro-inflammatory cytokine. Initially discovered as the major endogenous pyrogen, induces prostaglandin synthesis, neutrophil influx and activation, T-cell activation and cytokine production, B-cell activation and antibody production, and fibroblast proliferation and collagen production. Promotes Th17 differentiation of T-cells. Synergizes with IL12/interleukin-12 to induce IFNG synthesis from T-helper 1 (Th1) cells. Plays a role in angiogenesis by inducing VEGF production synergistically with TNF and IL6. Involved in transduction of inflammation downstream of pyroptosis: its mature form is specifically released in the extracellular milieu by passing through the gasdermin-D (GSDMD) pore. This is Interleukin-1 beta (IL1B) from Eumetopias jubatus (Steller sea lion).